The following is a 147-amino-acid chain: Hemoglobin subunit beta-M (147 aa).

Residue Val-2 is modified to N-acetylvaline. Positions 3–147 (HLTSEEKNCI…VAHALAHKYH (145 aa)) constitute a Globin domain. Thr-13 is modified (phosphothreonine). The residue at position 45 (Ser-45) is a Phosphoserine. Lys-60 carries the N6-acetyllysine modification. His-64 serves as a coordination point for heme b. N6-acetyllysine is present on Lys-83. Residue His-93 participates in heme b binding. The residue at position 94 (Cys-94) is an S-nitrosocysteine. Lys-145 is subject to N6-acetyllysine.

This sequence belongs to the globin family. In terms of assembly, heterotetramer of two alpha chains and two beta chains. In terms of tissue distribution, red blood cells.

Involved in oxygen transport from the lung to the various peripheral tissues. This is Hemoglobin subunit beta-M (HBB) from Didelphis virginiana (North American opossum).